The sequence spans 583 residues: Nuclear hormone receptor family member nhr-31 (583 aa).

Residues 43 to 77 (DLRTSGATSSSGPATSYIIRPSDKQPTVSSGGSQN) form a disordered region. The span at 46–58 (TSGATSSSGPATS) shows a compositional bias: low complexity. The span at 66-77 (KQPTVSSGGSQN) shows a compositional bias: polar residues. Residues 79–154 (DSVCAVCGDG…AGMDPKAVRP (76 aa)) constitute a DNA-binding region (nuclear receptor). 2 consecutive NR C4-type zinc fingers follow at residues 82-102 (CAVC…CYGC) and 118-142 (CRFS…FQRC). Residues 195–464 (ETRILLMQLM…DNLLAEMFGD (270 aa)) form the NR LBD domain.

It belongs to the nuclear hormone receptor family.

Its subcellular location is the nucleus. In terms of biological role, orphan nuclear receptor. This chain is Nuclear hormone receptor family member nhr-31 (nhr-31), found in Caenorhabditis elegans.